Consider the following 120-residue polypeptide: Large ribosomal subunit protein bL17 (120 aa).

The protein belongs to the bacterial ribosomal protein bL17 family. In terms of assembly, part of the 50S ribosomal subunit. Contacts protein L32.

This chain is Large ribosomal subunit protein bL17, found in Mesomycoplasma hyopneumoniae (strain 232) (Mycoplasma hyopneumoniae).